Consider the following 514-residue polypeptide: Glutamate--cysteine ligase, chloroplastic (514 aa).

The transit peptide at 1-55 (MALLSQAGGAYTVPSGHVSSRTGTKTVSGCVNVLRMKETYVSSYSRTLSTKSMLK) directs the protein to the chloroplast. Intrachain disulfides connect Cys-178-Cys-398 and Cys-341-Cys-356.

This sequence belongs to the carboxylate-amine ligase family. Glutamate--cysteine ligase type 2 subfamily. In terms of assembly, homodimer or monomer when oxidized or reduced, respectively. In terms of processing, the Cys-178-Cys-398 disulfide bridge is known to modulate the enzyme activity according to the redox status. The oxidized form constitutes the active enzyme.

The protein resides in the plastid. It is found in the chloroplast. It carries out the reaction L-cysteine + L-glutamate + ATP = gamma-L-glutamyl-L-cysteine + ADP + phosphate + H(+). It participates in sulfur metabolism; glutathione biosynthesis; glutathione from L-cysteine and L-glutamate: step 1/2. In terms of biological role, participates in the detoxification process. This Brassica juncea (Indian mustard) protein is Glutamate--cysteine ligase, chloroplastic (GSH1).